We begin with the raw amino-acid sequence, 94 residues long: Co-chaperonin GroES (94 aa).

Belongs to the GroES chaperonin family. In terms of assembly, heptamer of 7 subunits arranged in a ring. Interacts with the chaperonin GroEL.

It is found in the cytoplasm. Its function is as follows. Together with the chaperonin GroEL, plays an essential role in assisting protein folding. The GroEL-GroES system forms a nano-cage that allows encapsulation of the non-native substrate proteins and provides a physical environment optimized to promote and accelerate protein folding. GroES binds to the apical surface of the GroEL ring, thereby capping the opening of the GroEL channel. This Clostridium perfringens (strain SM101 / Type A) protein is Co-chaperonin GroES.